The following is a 700-amino-acid chain: Elongation factor G (700 aa).

Residues 10 to 285 (DRTRNIGIMA…AVIDYLPSPL (276 aa)) form the tr-type G domain. Residues 19–26 (AHIDAGKT), 83–87 (DTPGH), and 137–140 (NKMD) contribute to the GTP site.

The protein belongs to the TRAFAC class translation factor GTPase superfamily. Classic translation factor GTPase family. EF-G/EF-2 subfamily.

The protein resides in the cytoplasm. In terms of biological role, catalyzes the GTP-dependent ribosomal translocation step during translation elongation. During this step, the ribosome changes from the pre-translocational (PRE) to the post-translocational (POST) state as the newly formed A-site-bound peptidyl-tRNA and P-site-bound deacylated tRNA move to the P and E sites, respectively. Catalyzes the coordinated movement of the two tRNA molecules, the mRNA and conformational changes in the ribosome. The chain is Elongation factor G from Lacticaseibacillus paracasei (strain ATCC 334 / BCRC 17002 / CCUG 31169 / CIP 107868 / KCTC 3260 / NRRL B-441) (Lactobacillus paracasei).